The sequence spans 275 residues: NH(3)-dependent NAD(+) synthetase (275 aa).

Position 46–53 (46–53) interacts with ATP; sequence GISGGQDS. Residue aspartate 52 participates in Mg(2+) binding. Residue arginine 140 coordinates deamido-NAD(+). Residue threonine 160 coordinates ATP. Residue glutamate 165 participates in Mg(2+) binding. Positions 173 and 180 each coordinate deamido-NAD(+). ATP-binding residues include lysine 189 and threonine 211. 260 to 261 contributes to the deamido-NAD(+) binding site; it reads HK.

Belongs to the NAD synthetase family. In terms of assembly, homodimer.

It catalyses the reaction deamido-NAD(+) + NH4(+) + ATP = AMP + diphosphate + NAD(+) + H(+). It functions in the pathway cofactor biosynthesis; NAD(+) biosynthesis; NAD(+) from deamido-NAD(+) (ammonia route): step 1/1. In terms of biological role, catalyzes the ATP-dependent amidation of deamido-NAD to form NAD. Uses ammonia as a nitrogen source. This is NH(3)-dependent NAD(+) synthetase from Escherichia coli O6:K15:H31 (strain 536 / UPEC).